A 526-amino-acid polypeptide reads, in one-letter code: Tyrosine-protein kinase transforming protein Src (526 aa).

Residues 1-57 form a disordered region; it reads MGSSKSKPKDPSQRRCSLEPPDSTHHGGFPASQTPNKTAAPDTHRTPSRSFGTVATE. Gly2 is lipidated: N-myristoyl glycine; by host. Over residues 7–25 the composition is skewed to basic and acidic residues; that stretch reads KPKDPSQRRCSLEPPDSTH. Residues 81–142 enclose the SH3 domain; the sequence is GGVTTFVALY…PSNYVAPSDS (62 aa). An SH2 domain is found at 148–245; that stretch reads WYFGKITRRE…GLCHRLTNVC (98 aa). The region spanning 267 to 517 is the Protein kinase domain; that stretch reads LRLEVKLGQG…TFEYLQAQLL (251 aa). Residues 273-281 and Lys295 contribute to the ATP site; that span reads LGQGCFGEV. Asp386 serves as the catalytic Proton acceptor. Tyr416 is subject to Phosphotyrosine; by autocatalysis.

It belongs to the protein kinase superfamily. Tyr protein kinase family. SRC subfamily. In terms of processing, the phosphorylated form is termed pp60v-src.

It catalyses the reaction L-tyrosyl-[protein] + ATP = O-phospho-L-tyrosyl-[protein] + ADP + H(+). This phosphoprotein, required for both the initiation and the maintenance of neoplastic transformation, is a protein kinase that catalyzes the phosphorylation of tyrosine residues in vitro. In Galliformes, this protein is Tyrosine-protein kinase transforming protein Src (V-SRC).